Reading from the N-terminus, the 250-residue chain is Cell division protein ZapD (250 aa).

The protein belongs to the ZapD family. In terms of assembly, interacts with FtsZ.

The protein resides in the cytoplasm. Functionally, cell division factor that enhances FtsZ-ring assembly. Directly interacts with FtsZ and promotes bundling of FtsZ protofilaments, with a reduction in FtsZ GTPase activity. This is Cell division protein ZapD from Photorhabdus laumondii subsp. laumondii (strain DSM 15139 / CIP 105565 / TT01) (Photorhabdus luminescens subsp. laumondii).